We begin with the raw amino-acid sequence, 465 residues long: Intraflagellar transport protein 54 (465 aa).

Disordered regions lie at residues 119 to 301 and 347 to 366; these read VRSN…GFTM and LHGD…DKKP. A coiled-coil region spans residues 144 to 207; that stretch reads LEALAREKAE…KQKQQQQQQQ (64 aa). The span at 146–198 shows a compositional bias: basic and acidic residues; the sequence is ALAREKAEKERQRREQEQQERERKERERQEKEREEREKHELESRERAEAEQWK. The span at 199 to 220 shows a compositional bias: low complexity; that stretch reads QKQQQQQQQQQSAISPQKSPPK. Residues 222–242 are compositionally biased toward basic and acidic residues; it reads RFADDDKTRVEEHQPVIERPH.

It belongs to the TRAF3IP1 family.

It is found in the cell projection. The protein resides in the cilium. The protein localises to the flagellum. Its subcellular location is the cytoplasm. It localises to the cytoskeleton. It is found in the flagellum axoneme. The protein resides in the flagellum basal body. In terms of biological role, component of the intraflagellar transport complex B (IFT-B) involved in flagellar assembly. This chain is Intraflagellar transport protein 54, found in Giardia intestinalis (strain ATCC 50803 / WB clone C6) (Giardia lamblia).